The following is a 145-amino-acid chain: MKLLIQRVSAARVEVEGEVVGGIDQGLLALVGIEPQDDQASLTRALHKLLNYRVFSDEAGKMNRSLTDVQGGLLLVSQFTLAADTKSGMRPSFSSAAPPAQGEALFDALVEAARARHPQVATGRFGANMQVHLVNDGPVTFLLEV.

The Gly-cisPro motif, important for rejection of L-amino acids signature appears at 137-138 (GP).

Belongs to the DTD family. In terms of assembly, homodimer.

It localises to the cytoplasm. It carries out the reaction glycyl-tRNA(Ala) + H2O = tRNA(Ala) + glycine + H(+). The enzyme catalyses a D-aminoacyl-tRNA + H2O = a tRNA + a D-alpha-amino acid + H(+). In terms of biological role, an aminoacyl-tRNA editing enzyme that deacylates mischarged D-aminoacyl-tRNAs. Also deacylates mischarged glycyl-tRNA(Ala), protecting cells against glycine mischarging by AlaRS. Acts via tRNA-based rather than protein-based catalysis; rejects L-amino acids rather than detecting D-amino acids in the active site. By recycling D-aminoacyl-tRNA to D-amino acids and free tRNA molecules, this enzyme counteracts the toxicity associated with the formation of D-aminoacyl-tRNA entities in vivo and helps enforce protein L-homochirality. In Ectopseudomonas mendocina (strain ymp) (Pseudomonas mendocina), this protein is D-aminoacyl-tRNA deacylase.